Consider the following 130-residue polypeptide: Protein ApaG (130 aa).

Positions 3-127 (SAVTRGIEVT…FSLDVPEQRR (125 aa)) constitute an ApaG domain.

In Brucella canis (strain ATCC 23365 / NCTC 10854 / RM-666), this protein is Protein ApaG.